The sequence spans 589 residues: Heterogeneous nuclear ribonucleoprotein L (589 aa).

Over residues 1-16 (MSRRLLPRAEKRRRRL) the composition is skewed to basic residues. The disordered stretch occupies residues 1-100 (MSRRLLPRAE…NYDDPHKTPA (100 aa)). Basic and acidic residues predominate over residues 17-27 (EQRQQPDEQRR). A compositionally biased stretch (gly residues) spans 38 to 54 (AGGGGGGGRYYGGGSEG). S52 is subject to Phosphoserine. Residues K59 and K62 each participate in a glycyl lysine isopeptide (Lys-Gly) (interchain with G-Cter in SUMO2) cross-link. Gly residues predominate over residues 69-90 (QHGGGGGGGGGAGAAGGGGGGE). The residue at position 101 (S101) is a Phosphoserine. One can recognise an RRM 1 domain in the interval 102–176 (PVVHIRGLID…HPAFVNYSTS (75 aa)). Residue K136 forms a Glycyl lysine isopeptide (Lys-Gly) (interchain with G-Cter in SUMO2) linkage. S185 carries the post-translational modification Phosphoserine. Residues 193–270 (SVLLFTILNP…CTLKIEYAKP (78 aa)) enclose the RRM 2 domain. An N6-acetyllysine modification is found at K269. A compositionally biased stretch (polar residues) spans 284-301 (DYTNPNLSGQGDPGSNPN). A disordered region spans residues 284–378 (DYTNPNLSGQ…PPPPPEYGPH (95 aa)). A phosphoserine mark is found at S291 and S298. A Glycyl lysine isopeptide (Lys-Gly) (interchain with G-Cter in SUMO2) cross-link involves residue K302. Asymmetric dimethylarginine occurs at positions 354 and 358. Over residues 364–375 (GHPPPPPPPPEY) the composition is skewed to pro residues. S381 carries the phosphoserine modification. RRM domains follow at residues 382–478 (PVLM…KDFS) and 495–583 (RIQH…LCFS). Phosphoserine; by CaMK4 is present on S544. Residue K568 forms a Glycyl lysine isopeptide (Lys-Gly) (interchain with G-Cter in SUMO2) linkage.

In terms of assembly, identified in a IGF2BP1-dependent mRNP granule complex containing untranslated mRNAs. Interacts with HNRNPLL. Interacts with APEX1; the interaction is DNA-dependent. Component of a complex with SETD2. Interacts with ELAVL1. Part of a transcription inhibitory ribonucleoprotein complex composed at least of the circular RNA circZNF827, ZNF827 and HNRNPK. Interacts with CHD8 in an RNA-dependent manner. In terms of processing, several isoelectric forms of the L protein are probably the results of post-translational modifications. Phosphorylation at Ser-544 by CaMK4 enhances interaction with a CaMK4-responsive RNA element (CaRRE1), and prevents inclusion of the stress axis-regulated exon (STREX) of the KCNMA1 potassium channel transcripts upon membrane depolarization.

Its subcellular location is the nucleus. It is found in the nucleoplasm. The protein localises to the cytoplasm. Functionally, splicing factor binding to exonic or intronic sites and acting as either an activator or repressor of exon inclusion. Exhibits a binding preference for CA-rich elements. Component of the heterogeneous nuclear ribonucleoprotein (hnRNP) complexes and associated with most nascent transcripts. Associates, together with APEX1, to the negative calcium responsive element (nCaRE) B2 of the APEX2 promoter. As part of a ribonucleoprotein complex composed at least of ZNF827, HNRNPK and the circular RNA circZNF827 that nucleates the complex on chromatin, may negatively regulate the transcription of genes involved in neuronal differentiation. Regulates alternative splicing of a core group of genes involved in neuronal differentiation, likely by mediating H3K36me3-coupled transcription elongation and co-transcriptional RNA processing via interaction with CHD8. The sequence is that of Heterogeneous nuclear ribonucleoprotein L (HNRNPL) from Homo sapiens (Human).